The sequence spans 92 residues: Bombyxin A-3 (92 aa).

Positions 1–19 (MKILLAIALMLSTVMWVST) are cleaved as a signal peptide. A Pyrrolidone carboxylic acid modification is found at glutamine 20. Cystine bridges form between cysteine 29–cysteine 79, cysteine 41–cysteine 92, and cysteine 78–cysteine 83. A propeptide spans 50 to 70 (SDAQYVSYGSAWLMPYSEGRG) (c peptide like).

Belongs to the insulin family. Heterodimer of a B chain and an A chain linked by two disulfide bonds.

It localises to the secreted. Functionally, brain peptide responsible for activation of prothoracic glands to produce ecdysone in insects. In Bombyx mori (Silk moth), this protein is Bombyxin A-3 (BBXA3).